Here is a 266-residue protein sequence, read N- to C-terminus: Receptor-recognizing protein gp38 (266 aa).

Short sequence motifs (GRM) lie at residues Gly116–Tyr123, Ser126–His137, Ala157–Ser171, Lys174–Arg184, Gly187–Gly191, Tyr194–Ser200, Glu202–Asp209, His214–Asn220, Ala223–Ala228, and Gly232–His246.

Belongs to the receptor-recognizing protein gp38 family.

The protein resides in the virion. Its function is as follows. Receptor binding protein (RBP) that is at the tip of the long tail fibers and serves as the phage recognition site for the attachment host receptor. Probably uses the host receptor OmpA. In Enterobacteria phage Ox2 (Bacteriophage Ox2), this protein is Receptor-recognizing protein gp38 (38).